A 431-amino-acid polypeptide reads, in one-letter code: Serine/threonine-protein kinase Sgk1 (431 aa).

The tract at residues 1 to 60 (MTVKTEAAKGTLTYSRMRGMVAILIAFMKQRRMGLNDFIQKIANNSYACKHPEVQSILKI) is necessary for localization to the mitochondria. Positions 66-92 (PELMNANPSPPPSPSQQINLGPSSNPH) are disordered. Position 74 is a phosphoserine (S74). S78 carries the phosphoserine; by MAPK7 modification. A compositionally biased stretch (polar residues) spans 81-91 (QQINLGPSSNP). A Protein kinase domain is found at 98–355 (FHFLKVIGKG…FMEIKSHVFF (258 aa)). Residues 104 to 112 (IGKGSFGKV) and K127 each bind ATP. A Nuclear localization signal motif is present at residues 131–141 (KKAILKKKEEK). The Proton acceptor role is filled by D222. T256 is modified (phosphothreonine; by PDPK1). Residues 356 to 431 (SLINWDDLIN…SYAPPTDSFL (76 aa)) form the AGC-kinase C-terminal domain. At T369 the chain carries Phosphothreonine; by PKA. Residues S397, S401, and S422 each carry the phosphoserine modification.

This sequence belongs to the protein kinase superfamily. AGC Ser/Thr protein kinase family. As to quaternary structure, homodimer; disulfide-linked. Forms a trimeric complex with FBXW7 and NOTCH1. Interacts with MAPK3/ERK1, MAPK1/ERK2, MAP2K1/MEK1, MAP2K2/MEK2, NEDD4, NEDD4L, MAPT/TAU, MAPK7, CREB1, SLC9A3R2/NHERF2 and KCNJ1/ROMK1. Associates with the mammalian target of rapamycin complex 2 (mTORC2) via an interaction with MAPKAP1/SIN1. Post-translationally, regulated by phosphorylation. Activated by phosphorylation on Ser-422 by mTORC2, transforming it into a substrate for PDPK1 which phosphorylates it on Thr-256. Phosphorylation on Ser-397 and Ser-401 are also essential for its activity. Phosphorylation on Ser-78 by MAPK7 is required for growth factor-induced cell cycle progression. In terms of processing, ubiquitinated by NEDD4L; which promotes proteasomal degradation. Ubiquitinated by SYVN1 at the endoplasmic reticulum; which promotes rapid proteasomal degradation and maintains a high turnover rate in resting cells.

The protein localises to the cytoplasm. Its subcellular location is the nucleus. It localises to the endoplasmic reticulum membrane. It is found in the cell membrane. The protein resides in the mitochondrion. It catalyses the reaction L-seryl-[protein] + ATP = O-phospho-L-seryl-[protein] + ADP + H(+). It carries out the reaction L-threonyl-[protein] + ATP = O-phospho-L-threonyl-[protein] + ADP + H(+). Its activity is regulated as follows. Two specific sites, one in the kinase domain (Thr-256) and the other in the C-terminal regulatory region (Ser-422), need to be phosphorylated for its full activation. Phosphorylation at Ser-397 and Ser-401 are also essential for its activity. Activated by WNK1, WNK2, WNK3 and WNK4; which promote phosphorylation by mTORC2. Serine/threonine-protein kinase which is involved in the regulation of a wide variety of ion channels, membrane transporters, cellular enzymes, transcription factors, neuronal excitability, cell growth, proliferation, survival, migration and apoptosis. Plays an important role in cellular stress response. Contributes to regulation of renal Na(+) retention, renal K(+) elimination, salt appetite, gastric acid secretion, intestinal Na(+)/H(+) exchange and nutrient transport, insulin-dependent salt sensitivity of blood pressure, salt sensitivity of peripheral glucose uptake, cardiac repolarization and memory consolidation. Up-regulates Na(+) channels: SCNN1A/ENAC, SCN5A and ASIC1/ACCN2, K(+) channels: KCNJ1/ROMK1, KCNA1-5, KCNQ1-5 and KCNE1, epithelial Ca(2+) channels: TRPV5 and TRPV6, chloride channels: BSND, CLCN2 and CFTR, glutamate transporters: SLC1A3/EAAT1, SLC1A2 /EAAT2, SLC1A1/EAAT3, SLC1A6/EAAT4 and SLC1A7/EAAT5, amino acid transporters: SLC1A5/ASCT2, SLC38A1/SN1 and SLC6A19, creatine transporter: SLC6A8, Na(+)/dicarboxylate cotransporter: SLC13A2/NADC1, Na(+)-dependent phosphate cotransporter: SLC34A2/NAPI-2B, glutamate receptor: GRIK2/GLUR6. Up-regulates carriers: SLC9A3/NHE3, SLC12A1/NKCC2, SLC12A3/NCC, SLC5A3/SMIT, SLC2A1/GLUT1, SLC5A1/SGLT1 and SLC15A2/PEPT2. Regulates enzymes: GSK3A/B, PMM2 and Na(+)/K(+) ATPase, and transcription factors: CTNNB1 and nuclear factor NF-kappa-B. Stimulates sodium transport into epithelial cells by enhancing the stability and expression of SCNN1A/ENAC. This is achieved by phosphorylating the NEDD4L ubiquitin E3 ligase, promoting its interaction with 14-3-3 proteins, thereby preventing it from binding to SCNN1A/ENAC and targeting it for degradation. Regulates store-operated Ca(+2) entry (SOCE) by stimulating ORAI1 and STIM1. Regulates KCNJ1/ROMK1 directly via its phosphorylation or indirectly via increased interaction with SLC9A3R2/NHERF2. Phosphorylates MDM2 and activates MDM2-dependent ubiquitination of p53/TP53. Phosphorylates MAPT/TAU and mediates microtubule depolymerization and neurite formation in hippocampal neurons. Phosphorylates SLC2A4/GLUT4 and up-regulates its activity. Phosphorylates APBB1/FE65 and promotes its localization to the nucleus. Phosphorylates MAPK1/ERK2 and activates it by enhancing its interaction with MAP2K1/MEK1 and MAP2K2/MEK2. Phosphorylates FBXW7 and plays an inhibitory role in the NOTCH1 signaling. Phosphorylates FOXO1 resulting in its relocalization from the nucleus to the cytoplasm. Phosphorylates FOXO3, promoting its exit from the nucleus and interference with FOXO3-dependent transcription. Phosphorylates BRAF and MAP3K3/MEKK3 and inhibits their activity. Phosphorylates SLC9A3/NHE3 in response to dexamethasone, resulting in its activation and increased localization at the cell membrane. Phosphorylates CREB1. Necessary for vascular remodeling during angiogenesis. This Macaca fascicularis (Crab-eating macaque) protein is Serine/threonine-protein kinase Sgk1 (SGK1).